The sequence spans 311 residues: Protein translocase subunit SecF (311 aa).

The next 6 helical transmembrane spans lie at 19–39, 142–162, 166–186, 192–212, 245–265, and 272–292; these read AIYASLFLIGVSLVSLFTQGL, MLAMLYAMVAILIYISFRFEL, LGAVLALVHDVVLTMGFFSVL, LVVVAALLTVVGYSLNDTIVV, ITSLTTVLVLIALFVLGGAVI, and LLFGVGIGTYSSIFVASPLVL.

The protein belongs to the SecD/SecF family. SecF subfamily. As to quaternary structure, forms a complex with SecD. Part of the essential Sec protein translocation apparatus which comprises SecA, SecYEG and auxiliary proteins SecDF-YajC and YidC.

The protein localises to the cell inner membrane. In terms of biological role, part of the Sec protein translocase complex. Interacts with the SecYEG preprotein conducting channel. SecDF uses the proton motive force (PMF) to complete protein translocation after the ATP-dependent function of SecA. This chain is Protein translocase subunit SecF, found in Magnetococcus marinus (strain ATCC BAA-1437 / JCM 17883 / MC-1).